The sequence spans 775 residues: ADP-ribosylation factor GTPase-activating protein AGD4 (775 aa).

Positions 2–226 (ATFINLEDSP…IHQILTYAQQ (225 aa)) constitute a BAR domain. In terms of domain architecture, PH spans 288–421 (EVIKQGYLLK…WVNKITKAIG (134 aa)). One can recognise an Arf-GAP domain in the interval 467–603 (DDVSTILRGL…ALVIKDESEA (137 aa)). Residues 482-505 (CAECNAPEPDWASLNLGVLLCIQC) form a C4-type zinc finger. 2 ANK repeats span residues 682–711 (QGCSLLHVACHIGDSVLLELLLQFGADLNI) and 715–744 (HGRTPLHHCISSGNHKFAKILLRRGARPSI).

Expressed in roots, hypocotyls, cotyledons, leaf and shoot apical meristems and siliques.

Its function is as follows. Probable GTPase-activating protein. In Arabidopsis thaliana (Mouse-ear cress), this protein is ADP-ribosylation factor GTPase-activating protein AGD4 (AGD4).